Consider the following 89-residue polypeptide: Cell division protein FtsL (89 aa).

Topologically, residues Met-1–Lys-22 are cytoplasmic. The helical transmembrane segment at Leu-23 to Ile-40 threads the bilayer. Over Thr-41–Gln-89 the chain is Periplasmic.

It belongs to the FtsL family. As to quaternary structure, part of a complex composed of FtsB, FtsL and FtsQ.

The protein resides in the cell inner membrane. Functionally, essential cell division protein. May link together the upstream cell division proteins, which are predominantly cytoplasmic, with the downstream cell division proteins, which are predominantly periplasmic. The polypeptide is Cell division protein FtsL (Moranella endobia (strain PCIT)).